Reading from the N-terminus, the 439-residue chain is 26S proteasome regulatory subunit 6A (439 aa).

N-acetylmethionine is present on Met-1. Position 9 is a phosphoserine (Ser-9). ATP is bound at residue 227 to 234; the sequence is GPPGTGKT. Position 376 is a phosphoserine (Ser-376).

This sequence belongs to the AAA ATPase family. In terms of assembly, component of the 19S proteasome regulatory particle complex. The 26S proteasome consists of a 20S core particle (CP) and two 19S regulatory subunits (RP). The regulatory particle is made of a lid composed of 9 subunits, a base containing 6 ATPases including PSMC3 and few additional components. Interacts with PAAF1.

Its subcellular location is the cytoplasm. It is found in the nucleus. Its function is as follows. Component of the 26S proteasome, a multiprotein complex involved in the ATP-dependent degradation of ubiquitinated proteins. This complex plays a key role in the maintenance of protein homeostasis by removing misfolded or damaged proteins, which could impair cellular functions, and by removing proteins whose functions are no longer required. Therefore, the proteasome participates in numerous cellular processes, including cell cycle progression, apoptosis, or DNA damage repair. PSMC3 belongs to the heterohexameric ring of AAA (ATPases associated with diverse cellular activities) proteins that unfolds ubiquitinated target proteins that are concurrently translocated into a proteolytic chamber and degraded into peptides. The polypeptide is 26S proteasome regulatory subunit 6A (Psmc3) (Rattus norvegicus (Rat)).